A 172-amino-acid chain; its full sequence is DCC family protein At1g52590, chloroplastic (172 aa).

The transit peptide at 1 to 25 (MAILIPASFGRLTITSRAQVRVRVS) directs the protein to the chloroplast.

The protein belongs to the DCC thiol-disulfide oxidoreductase family.

The protein resides in the plastid. It localises to the chloroplast. The chain is DCC family protein At1g52590, chloroplastic from Arabidopsis thaliana (Mouse-ear cress).